Reading from the N-terminus, the 808-residue chain is Probable E3 ubiquitin-protein ligase hulA (808 aa).

The C2 domain occupies 1-112; that stretch reads MGSNLPAQPN…QMGGDEMLTR (112 aa). Disordered stretches follow at residues 134-231 and 275-346; these read NLST…GWER and RRAH…YFVD. Polar residues-rich tracts occupy residues 142-159 and 171-198; these read QANG…SSGL and GPSQ…PSST. A compositionally biased stretch (low complexity) spans 199–210; that stretch reads VAPVNGAAAPGA. A compositionally biased stretch (polar residues) spans 211-220; that stretch reads SRTNLSSFED. One can recognise a WW 1 domain in the interval 223 to 256; that stretch reads GRLPAGWERREDNLGRTYYVDHNTRTTTWTRPSS. The segment covering 275 to 288 has biased composition (basic and acidic residues); sequence RRAHQSRMLPEDRT. Over residues 289–303 the composition is skewed to polar residues; that stretch reads GASSPNLQENQQAQT. Positions 317 to 326 are enriched in low complexity; that stretch reads ATGATTAGTG. WW domains are found at residues 326-359 and 386-419; these read GELP…DPRR and GPLP…DPRL. The HECT domain occupies 475–808; that stretch reads SASDLKKRLM…VEETLGFGQE (334 aa). Cysteine 776 serves as the catalytic Glycyl thioester intermediate.

The protein belongs to the RSP5/NEDD4 family. In terms of assembly, interacts with creD.

Its subcellular location is the cytoplasm. The catalysed reaction is S-ubiquitinyl-[E2 ubiquitin-conjugating enzyme]-L-cysteine + [acceptor protein]-L-lysine = [E2 ubiquitin-conjugating enzyme]-L-cysteine + N(6)-ubiquitinyl-[acceptor protein]-L-lysine.. Its pathway is protein modification; protein ubiquitination. E3 ubiquitin-protein ligase which accepts ubiquitin from an E2 ubiquitin-conjugating enzyme in the form of a thioester and then directly transfers the ubiquitin to targeted substrates. Probably involved in the regulatory network controlling carbon source utilization. The chain is Probable E3 ubiquitin-protein ligase hulA (hulA) from Aspergillus terreus (strain NIH 2624 / FGSC A1156).